The chain runs to 356 residues: S-adenosylmethionine:tRNA ribosyltransferase-isomerase (356 aa).

Belongs to the QueA family. As to quaternary structure, monomer.

The protein resides in the cytoplasm. It catalyses the reaction 7-aminomethyl-7-carbaguanosine(34) in tRNA + S-adenosyl-L-methionine = epoxyqueuosine(34) in tRNA + adenine + L-methionine + 2 H(+). The protein operates within tRNA modification; tRNA-queuosine biosynthesis. Functionally, transfers and isomerizes the ribose moiety from AdoMet to the 7-aminomethyl group of 7-deazaguanine (preQ1-tRNA) to give epoxyqueuosine (oQ-tRNA). The protein is S-adenosylmethionine:tRNA ribosyltransferase-isomerase of Cronobacter sakazakii (strain ATCC BAA-894) (Enterobacter sakazakii).